A 201-amino-acid chain; its full sequence is MENLPEPLRVVAQELAKLPGLGPKSALRIALTMLKMPKEKVTGIGQSVIDLREKLCICEQCASITDTCPCRICSDPKREHDKLCLVSEWDSLLAIEEMGLYRGYYLVLGGLLSPLDGVTPQHLEFQKLEERLEKGEVKELILALGATVDAEATASYIKNMVESKYPGIELSRLAQGIPIGSEVKYTDKETLRQSLEYRQKL.

The C4-type zinc finger occupies 58–73; that stretch reads CEQCASITDTCPCRIC. Residues 81-178 form the Toprim domain; sequence DKLCLVSEWD…ELSRLAQGIP (98 aa).

Belongs to the RecR family.

In terms of biological role, may play a role in DNA repair. It seems to be involved in an RecBC-independent recombinational process of DNA repair. It may act with RecF and RecO. This Maridesulfovibrio salexigens (strain ATCC 14822 / DSM 2638 / NCIMB 8403 / VKM B-1763) (Desulfovibrio salexigens) protein is Recombination protein RecR.